A 514-amino-acid chain; its full sequence is 2,3-bisphosphoglycerate-independent phosphoglycerate mutase (514 aa).

Residues D14 and S64 each coordinate Mn(2+). S64 serves as the catalytic Phosphoserine intermediate. Residues H125, 155–156 (RD), R187, R193, 263–266 (RADR), and K336 contribute to the substrate site. Mn(2+)-binding residues include D403, H407, D444, H445, and H463.

It belongs to the BPG-independent phosphoglycerate mutase family. As to quaternary structure, monomer. Requires Mn(2+) as cofactor.

The catalysed reaction is (2R)-2-phosphoglycerate = (2R)-3-phosphoglycerate. Its pathway is carbohydrate degradation; glycolysis; pyruvate from D-glyceraldehyde 3-phosphate: step 3/5. Its function is as follows. Catalyzes the interconversion of 2-phosphoglycerate and 3-phosphoglycerate. This is 2,3-bisphosphoglycerate-independent phosphoglycerate mutase from Escherichia coli O1:K1 / APEC.